Here is a 177-residue protein sequence, read N- to C-terminus: GTP-dependent dephospho-CoA kinase (177 aa).

Positions 25, 31, 48, 49, 50, 67, 69, 124, and 147 each coordinate GTP.

It belongs to the GTP-dependent DPCK family. Monomer in solution.

It catalyses the reaction 3'-dephospho-CoA + GTP = GDP + CoA + H(+). The protein operates within cofactor biosynthesis; coenzyme A biosynthesis. In terms of biological role, catalyzes the GTP-dependent phosphorylation of the 3'-hydroxyl group of dephosphocoenzyme A to form coenzyme A (CoA). Can also use UTP, with lower efficiency and has weak activity with ATP, but shows a strong preference for GTP as the phosphate donor. The sequence is that of GTP-dependent dephospho-CoA kinase from Thermococcus kodakarensis (strain ATCC BAA-918 / JCM 12380 / KOD1) (Pyrococcus kodakaraensis (strain KOD1)).